The chain runs to 780 residues: GATOR2 complex protein WDR24 (780 aa).

WD repeat units follow at residues 67-107, 113-153, 156-196, 200-240, 244-286, and 290-333; these read SLNF…RNKQ, EHKR…SVST, GQSE…RCER, AHNG…AKEI, QTIA…IPFA, and EHKD…IDRA. The C4-type zinc finger occupies 708–730; that stretch reads NCSNCKRPMSNKGWICDRCRQCA. Cys709, Cys712, Cys723, Cys726, Cys733, Cys736, Cys747, Cys750, His752, His755, His758, Cys769, Cys773, His775, and Cys777 together coordinate Zn(2+). An RING-type; atypical zinc finger spans residues 731–780; that stretch reads SMCAVCHHVVKGLFVWCQGCCHGGHLQHIMNWMQNNCYCPAGCGHVCEYS.

The protein belongs to the WD repeat WDR24 family. As to quaternary structure, component of the GATOR2 subcomplex, composed of MIOS, SEC13, SEH1L, WDR24 and WDR59. The GATOR2 complex interacts with CASTOR1 and CASTOR2; the interaction is negatively regulated by arginine. The GATOR2 complex interacts with SESN1, SESN2 and SESN3; the interaction is negatively regulated by amino acids.

It is found in the lysosome membrane. It carries out the reaction S-ubiquitinyl-[E2 ubiquitin-conjugating enzyme]-L-cysteine + [acceptor protein]-L-lysine = [E2 ubiquitin-conjugating enzyme]-L-cysteine + N(6)-ubiquitinyl-[acceptor protein]-L-lysine.. It functions in the pathway protein modification; protein ubiquitination. The GATOR2 complex is negatively regulated by the upstream amino acid sensors CASTOR1 and SESN2, which sequester the GATOR2 complex in absence of amino acids. In the presence of abundant amino acids, GATOR2 is released from CASTOR1 and SESN2 and activated. Catalytic component of the GATOR2 complex, a multiprotein complex that acts as an activator of the amino acid-sensing branch of the mTORC1 signaling pathway. The GATOR2 complex indirectly activates mTORC1 through the inhibition of the GATOR1 subcomplex. GATOR2 probably acts as an E3 ubiquitin-protein ligase toward GATOR1. In the presence of abundant amino acids, the GATOR2 complex mediates ubiquitination of the NPRL2 core component of the GATOR1 complex, leading to GATOR1 inactivation. In the absence of amino acids, GATOR2 is inhibited, activating the GATOR1 complex. In addition to its role in regulation of the mTORC1 complex, promotes the acidification of lysosomes and facilitates autophagic flux. Within the GATOR2 complex, WDR24 constitutes the catalytic subunit that mediates 'Lys-6'-linked ubiquitination of NPRL2. The protein is GATOR2 complex protein WDR24 of Xenopus laevis (African clawed frog).